We begin with the raw amino-acid sequence, 153 residues long: Regulatory protein RecX (153 aa).

The protein belongs to the RecX family.

It localises to the cytoplasm. Its function is as follows. Modulates RecA activity. This is Regulatory protein RecX from Syntrophotalea carbinolica (strain DSM 2380 / NBRC 103641 / GraBd1) (Pelobacter carbinolicus).